The sequence spans 218 residues: uncharacterized protein (218 aa).

Positions 1-21 (MKKFVYKYSFGALLLLSGLSS) are cleaved as a signal peptide. Cys22 is lipidated: N-palmitoyl cysteine. A lipid anchor (S-diacylglycerol cysteine) is attached at Cys22.

This sequence belongs to the chlamydial CPn_0875/CT_734/TC_0107 family.

It is found in the cell membrane. This is an uncharacterized protein from Chlamydia muridarum (strain MoPn / Nigg).